We begin with the raw amino-acid sequence, 266 residues long: Glucosamine-6-phosphate deaminase (266 aa).

Residue aspartate 72 is the Proton acceptor; for enolization step of the active site. Catalysis depends on aspartate 141, which acts as the For ring-opening step. Histidine 143 serves as the catalytic Proton acceptor; for ring-opening step. The For ring-opening step role is filled by glutamate 148.

The protein belongs to the glucosamine/galactosamine-6-phosphate isomerase family. NagB subfamily. Homohexamer.

It carries out the reaction alpha-D-glucosamine 6-phosphate + H2O = beta-D-fructose 6-phosphate + NH4(+). It participates in amino-sugar metabolism; N-acetylneuraminate degradation; D-fructose 6-phosphate from N-acetylneuraminate: step 5/5. Its activity is regulated as follows. Allosterically activated by N-acetylglucosamine 6-phosphate (GlcNAc6P). In terms of biological role, catalyzes the reversible isomerization-deamination of glucosamine 6-phosphate (GlcN6P) to form fructose 6-phosphate (Fru6P) and ammonium ion. This chain is Glucosamine-6-phosphate deaminase, found in Vibrio vulnificus (strain CMCP6).